Reading from the N-terminus, the 361-residue chain is 3-dehydroquinate synthase (361 aa).

Residues 71–76 (DGEQNK), 105–109 (GVIGD), 129–130 (TT), K142, K151, and 169–172 (CLNT) contribute to the NAD(+) site. The Zn(2+) site is built by E184, H247, and H264.

This sequence belongs to the sugar phosphate cyclases superfamily. Dehydroquinate synthase family. Co(2+) serves as cofactor. Zn(2+) is required as a cofactor. Requires NAD(+) as cofactor.

The protein localises to the cytoplasm. The enzyme catalyses 7-phospho-2-dehydro-3-deoxy-D-arabino-heptonate = 3-dehydroquinate + phosphate. Its pathway is metabolic intermediate biosynthesis; chorismate biosynthesis; chorismate from D-erythrose 4-phosphate and phosphoenolpyruvate: step 2/7. In terms of biological role, catalyzes the conversion of 3-deoxy-D-arabino-heptulosonate 7-phosphate (DAHP) to dehydroquinate (DHQ). This Sodalis glossinidius (strain morsitans) protein is 3-dehydroquinate synthase.